The chain runs to 432 residues: MAQILAPSVQWQMRFTKNSTEVSSMTSKMWGSLFLKQNKKAPARSSTKYRALAVKSEDGTINRMEDLLNLDVTPYTDKIIAEYIWIGGTGIDVRSKSRTISKPVEHPSELPKWNYDGSSTGQAPGDDSEVILYPQAIFKDPFRGGNNILVICDTYTPQGEPIPTNKRHKAAQIFSDAKVLGEVPWFGIEQEYTLMQQDVNWPLGWNVGGYPGPQGPYYCAAGADKSFGRDISDAHYKACLYAGINISGTNGEVMPGQWEFQVGPSVGIEAGDHIWCARYLLERITEQAGVVLTLDPKPIDGDWNGAGCHTNYSTKSMREEGGFEVIKKAILNLSLRHKEHISAYGEGNERRLTGKHETASIDSFSWGVADRGCSIRVGRDTEKEGKGYLEDRRPASNMDPYVVTGLLAETTLLWEPTLEAEALAAQKLSLNV.

One can recognise a GS beta-grasp domain in the interval 79–159 (IIAEYIWIGG…VICDTYTPQG (81 aa)). The 267-residue stretch at 166–432 (KRHKAAQIFS…LAAQKLSLNV (267 aa)) folds into the GS catalytic domain.

The protein belongs to the glutamine synthetase family. In terms of assembly, homooctamer.

It localises to the plastid. The protein resides in the chloroplast. It carries out the reaction L-glutamate + NH4(+) + ATP = L-glutamine + ADP + phosphate + H(+). The light-modulated chloroplast enzyme, encoded by a nuclear gene and expressed primarily in leaves, is responsible for the reassimilation of the ammonia generated by photorespiration. This Daucus carota (Wild carrot) protein is Glutamine synthetase, chloroplastic (GLN2).